Reading from the N-terminus, the 259-residue chain is MRITQGERESSGEFLMSREFYGVLIGVTTLLVIFLPKSLFLLVILFLCFAISREVSVALGENEVFYFSPLVLLTYYFADPLVFPLIGLLSLYFAYKRWELNSFFKSTFLLFYPALFLVYLIKIKEISTYYLLIFIFGIWINDVFAYYIGKNFGKTPLFPKISPKKTVEGFLGGVLFGSLFFALTLPYGILNSFLLGTFVLTVGVAGDYFKSFIKRQVGIKDFSNVFGEHGGFTDRFDALVFSAPVFYLIMCAGELNCKL.

Transmembrane regions (helical) follow at residues 31–51 (LVIF…CFAI), 69–89 (PLVL…IGLL), 103–123 (FFKS…LIKI), 129–149 (YYLL…YYIG), 170–190 (FLGG…YGIL), 193–213 (FLLG…KSFI), and 236–256 (FDAL…GELN).

This sequence belongs to the CDS family.

The protein resides in the cell membrane. It carries out the reaction a 1,2-diacyl-sn-glycero-3-phosphate + CTP + H(+) = a CDP-1,2-diacyl-sn-glycerol + diphosphate. Its pathway is phospholipid metabolism; CDP-diacylglycerol biosynthesis; CDP-diacylglycerol from sn-glycerol 3-phosphate: step 3/3. The chain is Phosphatidate cytidylyltransferase (cdsA) from Aquifex aeolicus (strain VF5).